A 256-amino-acid chain; its full sequence is Thiazole synthase (256 aa).

The active-site Schiff-base intermediate with DXP is lysine 95. Residues glycine 156, 182-183, and 204-205 contribute to the 1-deoxy-D-xylulose 5-phosphate site; these read AG and NT.

The protein belongs to the ThiG family. As to quaternary structure, homotetramer. Forms heterodimers with either ThiH or ThiS.

It localises to the cytoplasm. It catalyses the reaction [ThiS sulfur-carrier protein]-C-terminal-Gly-aminoethanethioate + 2-iminoacetate + 1-deoxy-D-xylulose 5-phosphate = [ThiS sulfur-carrier protein]-C-terminal Gly-Gly + 2-[(2R,5Z)-2-carboxy-4-methylthiazol-5(2H)-ylidene]ethyl phosphate + 2 H2O + H(+). Its pathway is cofactor biosynthesis; thiamine diphosphate biosynthesis. Catalyzes the rearrangement of 1-deoxy-D-xylulose 5-phosphate (DXP) to produce the thiazole phosphate moiety of thiamine. Sulfur is provided by the thiocarboxylate moiety of the carrier protein ThiS. In vitro, sulfur can be provided by H(2)S. The polypeptide is Thiazole synthase (Citrobacter koseri (strain ATCC BAA-895 / CDC 4225-83 / SGSC4696)).